The sequence spans 396 residues: uncharacterized protein (396 aa).

K219 is modified (N6-(pyridoxal phosphate)lysine).

Belongs to the class-V pyridoxal-phosphate-dependent aminotransferase family. Pyridoxal 5'-phosphate is required as a cofactor.

It localises to the cytoplasm. The protein resides in the nucleus. This is an uncharacterized protein from Schizosaccharomyces pombe (strain 972 / ATCC 24843) (Fission yeast).